The primary structure comprises 825 residues: Breast cancer anti-estrogen resistance protein 3 (825 aa).

Alanine 2 is modified (N-acetylalanine). Residues serine 32, serine 78, and serine 83 each carry the phosphoserine modification. A disordered region spans residues 40–106 (DAYQDVSIHG…DRHGETFTFR (67 aa)). A compositionally biased stretch (polar residues) spans 79–94 (PRQNSPVTQDGIQESP). Positions 95–106 (WQDRHGETFTFR) are enriched in basic and acidic residues. In terms of domain architecture, SH2 spans 154-253 (WYHGRIPRQV…QSGAIIFQPI (100 aa)). 2 positions are modified to phosphoserine: serine 182 and serine 290. Lysine 334 carries the N6-methyllysine modification. 3 positions are modified to phosphoserine: serine 358, serine 363, and serine 375. The residue at position 442 (arginine 442) is an Omega-N-methylarginine. Serine 471 bears the Phosphoserine mark. Residues 548-818 (DPKVIAQHVL…TALSRKLEPP (271 aa)) enclose the Ras-GEF domain. The tract at residues 744–748 (LATAR) is mediates the interaction with BCAR1/p130CAS.

In terms of assembly, part of a complex comprised of PTPRA, BCAR1, BCAR3 (via SH2 domain) and SRC; the formation of the complex is dependent on integrin mediated-tyrosine phosphorylation of PTPRA. Within the complex, interacts (via SH2 domain) with PTPRA (when phosphorylated on 'Tyr-798'). Interacts (via Ras-GEF domain) with BCAR1. Interacts (via Ras-GEF domain) with NEDD9. Interacts with PTK2/FAK1. Interacts with PTPN1. Interacts (via SH2 domain) with EGFR (when tyrosine-phosphorylated). Post-translationally, phosphorylated on tyrosine residues. Ubiquitously expressed. Found in several cancer cell lines, but not in nonmalignant breast tissue.

The protein resides in the cytoplasm. The protein localises to the cell junction. It localises to the focal adhesion. Its function is as follows. Acts as an adapter protein downstream of several growth factor receptors to promote cell proliferation, migration, and redistribution of actin fibers. Specifically involved in INS/insulin signaling pathway by mediating MAPK1/ERK2-MAPK3/ERK1 activation and DNA synthesis. Promotes insulin-mediated membrane ruffling. In response to vasoconstrictor peptide EDN1, involved in the activation of RAP1 downstream of PTK2B via interaction with phosphorylated BCAR1. Inhibits cell migration and invasion via regulation of TGFB-mediated matrix digestion, actin filament rearrangement, and inhibition of invadopodia activity. May inhibit TGFB-SMAD signaling, via facilitating BCAR1 and SMAD2 and/or SMAD3 interaction. Regulates EGF-induced DNA synthesis. Required for the maintenance of ocular lens morphology and structural integrity, potentially via regulation of focal adhesion complex signaling. Acts upstream of PTPRA to regulate the localization of BCAR1 and PTPRA to focal adhesions, via regulation of SRC-mediated phosphorylation of PTPRA. Positively regulates integrin-induced tyrosine phosphorylation of BCAR1. Acts as a guanine nucleotide exchange factor (GEF) for small GTPases RALA, RAP1A and RRAS. However, in a contrasting study, lacks GEF activity towards RAP1. This is Breast cancer anti-estrogen resistance protein 3 (BCAR3) from Homo sapiens (Human).